A 184-amino-acid polypeptide reads, in one-letter code: Large ribosomal subunit protein uL5c (184 aa).

The protein belongs to the universal ribosomal protein uL5 family. Part of the 50S ribosomal subunit; contacts the 5S rRNA.

The protein localises to the plastid. It localises to the chloroplast. Binds 5S rRNA, forms part of the central protuberance of the 50S subunit. The protein is Large ribosomal subunit protein uL5c (rpl5) of Ostreococcus tauri.